A 300-amino-acid chain; its full sequence is Protein XRI1 (300 aa).

In terms of assembly, interacts (via C-terminal domain) with MIP1.

The protein localises to the nucleus. Required for mitotic division of the generative cell nucleus and the development of mature tricellular pollen grains, and for male and female meiosis. The polypeptide is Protein XRI1 (XRI1) (Arabidopsis thaliana (Mouse-ear cress)).